We begin with the raw amino-acid sequence, 159 residues long: Phosphopantetheine adenylyltransferase (159 aa).

A substrate-binding site is contributed by Ser9. ATP-binding positions include 9 to 10 (SF) and His17. Residues Lys41, Ile73, and Lys87 each contribute to the substrate site. ATP contacts are provided by residues 88 to 90 (GLR), Glu98, and 122 to 128 (WGYVSSS).

Belongs to the bacterial CoaD family. Homohexamer. Mg(2+) serves as cofactor.

Its subcellular location is the cytoplasm. The enzyme catalyses (R)-4'-phosphopantetheine + ATP + H(+) = 3'-dephospho-CoA + diphosphate. The protein operates within cofactor biosynthesis; coenzyme A biosynthesis; CoA from (R)-pantothenate: step 4/5. Functionally, reversibly transfers an adenylyl group from ATP to 4'-phosphopantetheine, yielding dephospho-CoA (dPCoA) and pyrophosphate. In Nocardioides sp. (strain ATCC BAA-499 / JS614), this protein is Phosphopantetheine adenylyltransferase.